The chain runs to 601 residues: Glutathione-regulated potassium-efflux system protein KefB (601 aa).

13 consecutive transmembrane segments (helical) span residues 4–24 (SDFLLAGVLFLFAAVAAVPLA), 29–49 (IGAVLGYLLAGIAIGPWGLGF), 55–75 (EILHFSELGVVFLMFIIGLEL), 87–107 (IFGVGAAQVLLSAALLAGLLM), 115–135 (AAVVGGIGLAMSSTAMALQLM), 152–172 (VLLFQDLAVIPALALVPLLAG), 177–197 (HFDWMKIGMKVLAFVGMLIGG), 207–227 (FIAASGVREVFTAATLLLVLG), 230–250 (LFMDALGLSMALGTFIAGVLL), 268–288 (GLLLGLFFISVGMSLNLGVLY), 291–311 (LLWVVISVVVLVAVKILVLYL), 324–344 (MQFAGVLSQGGEFAFVLFSTA), and 356–376 (ALLLVTVTLSMMTTPLLMKLV). The RCK N-terminal domain maps to 400 to 519 (KPQVIVVGFG…AGVTQFSRET (120 aa)).

It belongs to the monovalent cation:proton antiporter 2 (CPA2) transporter (TC 2.A.37) family. KefB subfamily. In terms of assembly, interacts with the regulatory subunit KefG.

It localises to the cell inner membrane. Pore-forming subunit of a potassium efflux system that confers protection against electrophiles. Catalyzes K(+)/H(+) antiport. This is Glutathione-regulated potassium-efflux system protein KefB from Escherichia coli O139:H28 (strain E24377A / ETEC).